The chain runs to 178 residues: Large ribosomal subunit protein uL6 (178 aa).

The protein belongs to the universal ribosomal protein uL6 family. As to quaternary structure, part of the 50S ribosomal subunit.

This protein binds to the 23S rRNA, and is important in its secondary structure. It is located near the subunit interface in the base of the L7/L12 stalk, and near the tRNA binding site of the peptidyltransferase center. This is Large ribosomal subunit protein uL6 from Streptococcus sanguinis (strain SK36).